A 346-amino-acid chain; its full sequence is Acrosin (346 aa).

An N-terminal signal peptide occupies residues 1-19 (MALLLPLAVLLAACRPGHG). Disulfide bonds link Cys24–Cys146, Cys27–Cys154, Cys70–Cys86, Cys168–Cys240, Cys203–Cys219, and Cys230–Cys260. In terms of domain architecture, Peptidase S1 spans 41 to 284 (VVGGTEALHG…FYNWILLQVR (244 aa)). The active-site Charge relay system is the His85. Asn128 carries an N-linked (GlcNAc...) asparagine glycan. Residue Asp134 is the Charge relay system of the active site. N-linked (GlcNAc...) asparagine glycosylation is present at Asn204. The Charge relay system role is filled by Ser234. The propeptide occupies 266 to 346 (PGIYTSTQHF…LLQSLWGSKA (81 aa)).

Belongs to the peptidase S1 family. In terms of assembly, heavy chain (catalytic) and a light chain linked by two disulfide bonds. In terms of processing, glycosylated.

The catalysed reaction is Preferential cleavage: Arg-|-Xaa, Lys-|-Xaa.. Inhibited by aprotinin, ovomucoid, soybean trypsin inhibitor, benzamidine, p-aminobenzamidine, and zinc ions. Activity also inhibited by a Kazal-type proteinase inhibitor. Serine protease of trypsin-like cleavage specificity. Synthesized in a zymogen form, proacrosin and stored in the acrosome. This chain is Acrosin, found in Meleagris gallopavo (Wild turkey).